Here is a 59-residue protein sequence, read N- to C-terminus: Conotoxin mr5a (59 aa).

The signal sequence occupies residues 1 to 22 (MRCLPVFVILLLLIASAPSVDA). A propeptide spanning residues 23-48 (RPKTKDDMPLASFHDNAKRILQILQD) is cleaved from the precursor.

Contains 2 disulfide bonds that can be either 'C1-C3, C2-C4' or 'C1-C4, C2-C3', since these disulfide connectivities have been observed for conotoxins with cysteine framework V (for examples, see AC P0DQQ7 and AC P81755). In terms of tissue distribution, expressed by the venom duct.

It localises to the secreted. The protein is Conotoxin mr5a of Conus marmoreus (Marble cone).